The sequence spans 695 residues: Threonine--tRNA ligase (695 aa).

Residues 1–66 (MSAPARPAPA…DTDVEVTPVA (66 aa)) enclose the TGS domain. Residues 263 to 569 (DHRKLGVELD…LTEHYAGAFP (307 aa)) form a catalytic region. Residues Cys368, His419, and His546 each contribute to the Zn(2+) site.

Belongs to the class-II aminoacyl-tRNA synthetase family. Homodimer. Zn(2+) serves as cofactor.

It localises to the cytoplasm. The enzyme catalyses tRNA(Thr) + L-threonine + ATP = L-threonyl-tRNA(Thr) + AMP + diphosphate + H(+). Functionally, catalyzes the attachment of threonine to tRNA(Thr) in a two-step reaction: L-threonine is first activated by ATP to form Thr-AMP and then transferred to the acceptor end of tRNA(Thr). Also edits incorrectly charged L-seryl-tRNA(Thr). This is Threonine--tRNA ligase from Mycolicibacterium gilvum (strain PYR-GCK) (Mycobacterium gilvum (strain PYR-GCK)).